A 1098-amino-acid chain; its full sequence is Beta-alanine-activating enzyme (1098 aa).

Residues 198–206, D428, R442, and K527 each bind ATP; that span reads TSGTTGIPK. The Carrier domain maps to 553–630; sequence EDLWEKLQYL…EIYNHILQTV (78 aa). S589 is modified (O-(pantetheine 4'-phosphoryl)serine). S649 and S724 each carry phosphoserine.

This sequence belongs to the ATP-dependent AMP-binding enzyme family. As to expression, ubiquitously expressed in adult tissues.

Covalently binds beta-alanine in an ATP-dependent manner to form a thioester bond with its phosphopantetheine group and transfers it to an, as yet, unknown acceptor. May be required for a post-translational protein modification or for post-transcriptional modification of an RNA. The polypeptide is Beta-alanine-activating enzyme (AASDH) (Homo sapiens (Human)).